We begin with the raw amino-acid sequence, 468 residues long: ATP synthase subunit beta (468 aa).

An ATP-binding site is contributed by 155–162 (GGAGVGKT).

The protein belongs to the ATPase alpha/beta chains family. As to quaternary structure, F-type ATPases have 2 components, CF(1) - the catalytic core - and CF(0) - the membrane proton channel. CF(1) has five subunits: alpha(3), beta(3), gamma(1), delta(1), epsilon(1). CF(0) has three main subunits: a(1), b(2) and c(9-12). The alpha and beta chains form an alternating ring which encloses part of the gamma chain. CF(1) is attached to CF(0) by a central stalk formed by the gamma and epsilon chains, while a peripheral stalk is formed by the delta and b chains.

The protein resides in the cell membrane. The enzyme catalyses ATP + H2O + 4 H(+)(in) = ADP + phosphate + 5 H(+)(out). In terms of biological role, produces ATP from ADP in the presence of a proton gradient across the membrane. The catalytic sites are hosted primarily by the beta subunits. This Bacillus cereus (strain G9842) protein is ATP synthase subunit beta.